The following is a 417-amino-acid chain: Glutamyl-tRNA reductase (417 aa).

Residues 49-52 (TCNR), Ser-105, 110-112 (ETQ), and Gln-116 contribute to the substrate site. Cys-50 (nucleophile) is an active-site residue. 185–190 (GAGEMI) is an NADP(+) binding site.

This sequence belongs to the glutamyl-tRNA reductase family. In terms of assembly, homodimer.

The enzyme catalyses (S)-4-amino-5-oxopentanoate + tRNA(Glu) + NADP(+) = L-glutamyl-tRNA(Glu) + NADPH + H(+). The protein operates within porphyrin-containing compound metabolism; protoporphyrin-IX biosynthesis; 5-aminolevulinate from L-glutamyl-tRNA(Glu): step 1/2. Catalyzes the NADPH-dependent reduction of glutamyl-tRNA(Glu) to glutamate 1-semialdehyde (GSA). This chain is Glutamyl-tRNA reductase, found in Chromobacterium violaceum (strain ATCC 12472 / DSM 30191 / JCM 1249 / CCUG 213 / NBRC 12614 / NCIMB 9131 / NCTC 9757 / MK).